The chain runs to 105 residues: Gastrin/cholecystokinin-like peptide (105 aa).

The signal sequence occupies residues 1-20; it reads MKTKVFLGLILSAAVTACLC. Positions 21-38 are excised as a propeptide; that stretch reads RPAAKAPGGSHRPTSSLA. Residues 24 to 51 form a disordered region; that stretch reads AKAPGGSHRPTSSLARRDWPEPPSQEQQ. Tyrosine 87 carries the post-translational modification Sulfotyrosine. The residue at position 93 (phenylalanine 93) is a Phenylalanine amide. Positions 97 to 105 are excised as a propeptide; sequence STEDAADAA.

Belongs to the gastrin/cholecystokinin family.

It is found in the secreted. Functionally, potent stimulus of gastric acid, but not of pancreatic secretion. The chain is Gastrin/cholecystokinin-like peptide from Gallus gallus (Chicken).